Consider the following 122-residue polypeptide: Large ribosomal subunit protein bL17 (122 aa).

It belongs to the bacterial ribosomal protein bL17 family. In terms of assembly, part of the 50S ribosomal subunit. Contacts protein L32.

This Staphylococcus epidermidis (strain ATCC 35984 / DSM 28319 / BCRC 17069 / CCUG 31568 / BM 3577 / RP62A) protein is Large ribosomal subunit protein bL17.